A 133-amino-acid polypeptide reads, in one-letter code: Bacteriohemerythrin (133 aa).

Fe cation-binding residues include His-19, His-56, Glu-60, His-75, His-79, His-115, and Asp-120.

The protein belongs to the hemerythrin family. Monomer.

Oxygen-binding protein. May be involved in a storage mechanism or for delivery to oxygen-requiring enzymes. The oxygen-binding site contains two iron atoms. This Campylobacter jejuni subsp. jejuni serotype O:6 (strain 81116 / NCTC 11828) protein is Bacteriohemerythrin.